Reading from the N-terminus, the 395-residue chain is PVGETTLGRISNVLGEPVDNLGPVQSSTTFPIHRSAPAFTQLDTKLSIFETGIKVVDLSAPYRRGGKIGLFGGAGVGKTVLITESINNIAKAHGGVSVSGGVGERTREGNDLYMEMKESKVINEQNISESKVALVYGQMNEPPGARMRVGSTASTMAEYFRDVNKQDVPPFIDNIFRFVQAGSEVSALLGRMPSAVGYQPTLGTEMGSLQERITSTKEGSITSIQAVYVPADDLTDPAPATTSAHLDATTVLSRGLAAKGIYPAVDPLDSTSTMLQPWIAGEEHYDTAQGVKQTLQRYKELQDIIAIPGLDELSEEDRLTVARARKIERFLSQPFFVAEVFTGSPGKYVSLSETIKGFQMILPGELDNLPEQAFYLVGNIDEATAKAASLQAEVQ.

72–79 (GGAGVGKT) is a binding site for ATP.

The protein belongs to the ATPase alpha/beta chains family. In terms of assembly, F-type ATPases have 2 components, CF(1) - the catalytic core - and CF(0) - the membrane proton channel. CF(1) has five subunits: alpha(3), beta(3), gamma(1), delta(1), epsilon(1). CF(0) has four main subunits: a(1), b(1), b'(1) and c(9-12).

It is found in the plastid. Its subcellular location is the chloroplast thylakoid membrane. It catalyses the reaction ATP + H2O + 4 H(+)(in) = ADP + phosphate + 5 H(+)(out). In terms of biological role, produces ATP from ADP in the presence of a proton gradient across the membrane. The catalytic sites are hosted primarily by the beta subunits. The chain is ATP synthase subunit beta, chloroplastic from Blechnum occidentale (Hammock fern).